A 227-amino-acid chain; its full sequence is Cytochrome c oxidase subunit 2 (227 aa).

Residues 1–14 are Mitochondrial intermembrane-facing; that stretch reads MAHRAQVGLQDATS. The chain crosses the membrane as a helical span at residues 15-45; it reads PIMEELVIFHDHALMIIFLICFLVLYALFLT. Topologically, residues 46-59 are mitochondrial matrix; the sequence is LTTKLTNTNISDAQ. Residues 60–87 traverse the membrane as a helical segment; that stretch reads EMETIWTTLPAIILILIALPSLRILYLT. The Mitochondrial intermembrane portion of the chain corresponds to 88–227; sequence DEINDPSFTI…IFEMGPVFAL (140 aa). Cu cation-binding residues include His-161, Cys-196, Glu-198, Cys-200, His-204, and Met-207. Glu-198 contacts Mg(2+).

This sequence belongs to the cytochrome c oxidase subunit 2 family. In terms of assembly, component of the cytochrome c oxidase (complex IV, CIV), a multisubunit enzyme composed of 14 subunits. The complex is composed of a catalytic core of 3 subunits MT-CO1, MT-CO2 and MT-CO3, encoded in the mitochondrial DNA, and 11 supernumerary subunits COX4I, COX5A, COX5B, COX6A, COX6B, COX6C, COX7A, COX7B, COX7C, COX8 and NDUFA4, which are encoded in the nuclear genome. The complex exists as a monomer or a dimer and forms supercomplexes (SCs) in the inner mitochondrial membrane with NADH-ubiquinone oxidoreductase (complex I, CI) and ubiquinol-cytochrome c oxidoreductase (cytochrome b-c1 complex, complex III, CIII), resulting in different assemblies (supercomplex SCI(1)III(2)IV(1) and megacomplex MCI(2)III(2)IV(2)). Found in a complex with TMEM177, COA6, COX18, COX20, SCO1 and SCO2. Interacts with TMEM177 in a COX20-dependent manner. Interacts with COX20. Interacts with COX16. Cu cation is required as a cofactor.

The protein resides in the mitochondrion inner membrane. The enzyme catalyses 4 Fe(II)-[cytochrome c] + O2 + 8 H(+)(in) = 4 Fe(III)-[cytochrome c] + 2 H2O + 4 H(+)(out). Its function is as follows. Component of the cytochrome c oxidase, the last enzyme in the mitochondrial electron transport chain which drives oxidative phosphorylation. The respiratory chain contains 3 multisubunit complexes succinate dehydrogenase (complex II, CII), ubiquinol-cytochrome c oxidoreductase (cytochrome b-c1 complex, complex III, CIII) and cytochrome c oxidase (complex IV, CIV), that cooperate to transfer electrons derived from NADH and succinate to molecular oxygen, creating an electrochemical gradient over the inner membrane that drives transmembrane transport and the ATP synthase. Cytochrome c oxidase is the component of the respiratory chain that catalyzes the reduction of oxygen to water. Electrons originating from reduced cytochrome c in the intermembrane space (IMS) are transferred via the dinuclear copper A center (CU(A)) of subunit 2 and heme A of subunit 1 to the active site in subunit 1, a binuclear center (BNC) formed by heme A3 and copper B (CU(B)). The BNC reduces molecular oxygen to 2 water molecules using 4 electrons from cytochrome c in the IMS and 4 protons from the mitochondrial matrix. This Pongo pygmaeus (Bornean orangutan) protein is Cytochrome c oxidase subunit 2 (MT-CO2).